A 399-amino-acid polypeptide reads, in one-letter code: Enolase (399 aa).

Glutamine 149 is a (2R)-2-phosphoglycerate binding site. Glutamate 191 acts as the Proton donor in catalysis. Aspartate 227, glutamate 268, and aspartate 293 together coordinate Mg(2+). Lysine 318, arginine 347, serine 348, and lysine 369 together coordinate (2R)-2-phosphoglycerate. Lysine 318 acts as the Proton acceptor in catalysis.

Belongs to the enolase family. The cofactor is Mg(2+).

The protein localises to the cytoplasm. It is found in the secreted. It localises to the cell surface. The catalysed reaction is (2R)-2-phosphoglycerate = phosphoenolpyruvate + H2O. It participates in carbohydrate degradation; glycolysis; pyruvate from D-glyceraldehyde 3-phosphate: step 4/5. In terms of biological role, catalyzes the reversible conversion of 2-phosphoglycerate (2-PG) into phosphoenolpyruvate (PEP). It is essential for the degradation of carbohydrates via glycolysis. This chain is Enolase, found in Archaeoglobus fulgidus (strain ATCC 49558 / DSM 4304 / JCM 9628 / NBRC 100126 / VC-16).